Here is a 248-residue protein sequence, read N- to C-terminus: Mannose-binding protein C (248 aa).

Residues 1–20 form the signal peptide; it reads MSLFPSLTLLLLSVVATSYS. One can recognise a Collagen-like domain in the interval 42–99; sequence GINGFPGKDGRDGTKGEKGEPGQGLRGLQGPPGKLGPPGNPGSSGSPGPKGQKGDPGE. Residues 43 to 111 are disordered; it reads INGFPGKDGR…DCESSLAASE (69 aa). Pro-47 carries the 4-hydroxyproline modification. The segment covering 49-61 has biased composition (basic and acidic residues); the sequence is KDGRDGTKGEKGE. 4-hydroxyproline occurs at positions 73, 79, 82, and 88. The span at 82–91 shows a compositional bias: low complexity; that stretch reads PGSSGSPGPK. The stretch at 112–130 forms a coiled coil; it reads RKALQTEMARIKKWLTFSL. Residues 134-245 enclose the C-type lectin domain; that stretch reads VGNKFFLTNG…CSSSHLALCE (112 aa). 2 disulfide bridges follow: Cys-155/Cys-244 and Cys-222/Cys-236.

Oligomeric complex of 3 or more homotrimers. Interacts with MASP1 and MASP2. Interacts with MEP1A and MEP1B and may inhibit their catalytic activity. In terms of processing, hydroxylation on proline residues within the sequence motif, GXPG, is most likely to be 4-hydroxy as this fits the requirement for 4-hydroxylation in vertebrates.

It is found in the secreted. Its function is as follows. Calcium-dependent lectin involved in innate immune defense. Binds mannose, fucose and N-acetylglucosamine on different microorganisms and activates the lectin complement pathway. Binds to late apoptotic cells, as well as to apoptotic blebs and to necrotic cells, but not to early apoptotic cells, facilitating their uptake by macrophages. The chain is Mannose-binding protein C (MBL2) from Macaca fascicularis (Crab-eating macaque).